The primary structure comprises 149 residues: MKTFTPKPADLTHDWYVIDATDVVLGRLATQAAVLLRGKNKPTYAPHADSGNHVIIINADKIALTGNKMGKELYSHSGRPGGLRRDSYAELLEKNPERIIKNAVKGMLPKNRLAKVQLDRLRVFRGAEHPHTPQKPQVFEIAQVSQQAK.

It belongs to the universal ribosomal protein uL13 family. Part of the 50S ribosomal subunit.

Its function is as follows. This protein is one of the early assembly proteins of the 50S ribosomal subunit, although it is not seen to bind rRNA by itself. It is important during the early stages of 50S assembly. The chain is Large ribosomal subunit protein uL13 from Bifidobacterium longum subsp. infantis (strain ATCC 15697 / DSM 20088 / JCM 1222 / NCTC 11817 / S12).